The following is a 341-amino-acid chain: ATP-dependent 6-phosphofructokinase 3 (341 aa).

ATP contacts are provided by residues Gly-10, 72 to 73 (RV), and 102 to 105 (GEGT). Residue Glu-103 coordinates Mg(2+). Substrate contacts are provided by residues 125-127 (TID), Arg-162, 169-171 (MGR), Glu-222, Arg-266, and 272-275 (HVQR). Asp-127 serves as the catalytic Proton acceptor.

This sequence belongs to the phosphofructokinase type A (PFKA) family. Mixed-substrate PFK group III subfamily. Homodimer or homotetramer. Mg(2+) serves as cofactor.

It is found in the cytoplasm. It carries out the reaction beta-D-fructose 6-phosphate + ATP = beta-D-fructose 1,6-bisphosphate + ADP + H(+). Its pathway is carbohydrate degradation; glycolysis; D-glyceraldehyde 3-phosphate and glycerone phosphate from D-glucose: step 3/4. Catalyzes the phosphorylation of D-fructose 6-phosphate to fructose 1,6-bisphosphate by ATP, the first committing step of glycolysis. The polypeptide is ATP-dependent 6-phosphofructokinase 3 (Streptomyces coelicolor (strain ATCC BAA-471 / A3(2) / M145)).